A 109-amino-acid polypeptide reads, in one-letter code: Nucleoid-associated protein NT01EI_1109 (109 aa).

A disordered region spans residues 89–109 (KERMASVSSGMQLPPGFKMPF).

It belongs to the YbaB/EbfC family. Homodimer.

The protein localises to the cytoplasm. It localises to the nucleoid. Its function is as follows. Binds to DNA and alters its conformation. May be involved in regulation of gene expression, nucleoid organization and DNA protection. In Edwardsiella ictaluri (strain 93-146), this protein is Nucleoid-associated protein NT01EI_1109.